We begin with the raw amino-acid sequence, 593 residues long: Probable 5'-nucleotidase (593 aa).

The N-terminal stretch at 1-21 is a signal peptide; the sequence is MKRFIPHRVIHAVCIGLALVG. A lipid anchor (N-palmitoyl cysteine) is attached at cysteine 22. A lipid anchor (S-diacylglycerol cysteine) is attached at cysteine 22. Aspartate 41, histidine 43, aspartate 91, asparagine 123, and histidine 224 together coordinate a divalent metal cation. Residues phenylalanine 456 and 539–545 each bind substrate; that span reads YIARGKD.

The protein belongs to the 5'-nucleotidase family. It depends on a divalent metal cation as a cofactor.

Its subcellular location is the cell membrane. It catalyses the reaction a ribonucleoside 5'-phosphate + H2O = a ribonucleoside + phosphate. The sequence is that of Probable 5'-nucleotidase from Treponema pallidum (strain Nichols).